The primary structure comprises 345 residues: Arginase (345 aa).

Positions 1–16 are enriched in basic and acidic residues; sequence MKETAAAKFERQHMDS. The interval 1–34 is disordered; that stretch reads MKETAAAKFERQHMDSPDLGTDDDDKMSPATSPF. Residues isoleucine 101, histidine 124, serine 126, glycine 128, isoleucine 232, and cysteine 234 each contribute to the Mn(2+) site.

This sequence belongs to the arginase family. In terms of assembly, homotrimer. Mn(2+) is required as a cofactor.

It catalyses the reaction L-arginine + H2O = urea + L-ornithine. It functions in the pathway nitrogen metabolism; urea cycle; L-ornithine and urea from L-arginine: step 1/1. Its activity is regulated as follows. The enzyme activity is increased in the range of 20-50% upon the addition of Mn(2+) (1 mM), Co(2+) (1 mM), Ni(2+) (1 and 5 mM) and K(+) (5 mM). In contrast, the addition of Cu(2+), Zn(2+), Ca(2+), Mg(2+), Fe(2+) (both 1 and 5 mM), and Co(2+) (5 mM) strongly suppresses the arginase activity. SDS (1%) and EDTA (1 mM) are the most potent inhibitors. Reducing agents DTT (1 mM), PMSF (1 mM) and beta-mercaptoethanol (1 mM) also significantly inhibit activity by 85%, 64% and 35%, respectively. Surfactants Triton X-100 (1%), Tween-80 (1%) and Tween-20 (1%) are more tolerant, showing a slight decrease of arginase activity in the range of 10-30%. In terms of biological role, cold-active L-arginase that catalyzes the hydrolysis of L-arginine to L-ornithine and urea, an essential reaction in the urea cycle for toxic ammonia removal and cell proliferation. Is not able to use D-arginine or L-canavanine as substrates. The polypeptide is Arginase (Glaciozyma antarctica (strain PI12) (Antarctic psychrophilic yeast)).